The chain runs to 84 residues: Small ribosomal subunit protein bS16 (84 aa).

It belongs to the bacterial ribosomal protein bS16 family.

In Burkholderia multivorans (strain ATCC 17616 / 249), this protein is Small ribosomal subunit protein bS16.